Consider the following 349-residue polypeptide: AdoMet-dependent heme synthase (349 aa).

Residues 5–214 (TNAPRLIAWE…LHWFYEMQKE (210 aa)) enclose the Radical SAM core domain. Residues cysteine 19, cysteine 23, and cysteine 26 each contribute to the [4Fe-4S] cluster site.

It belongs to the radical SAM superfamily. The cofactor is [4Fe-4S] cluster.

The enzyme catalyses Fe-coproporphyrin III + 2 S-adenosyl-L-methionine = heme b + 2 5'-deoxyadenosine + 2 L-methionine + 2 CO2. Its pathway is porphyrin-containing compound metabolism; protoheme biosynthesis. Involved in siroheme-dependent heme b biosynthesis. Catalyzes the conversion of Fe-coproporphyrin III into heme by the oxidative decarboxylation of two propionate side chains. This Methanosarcina barkeri (strain Fusaro / DSM 804) protein is AdoMet-dependent heme synthase.